Consider the following 93-residue polypeptide: Acylphosphatase (93 aa).

Residues 6-92 (RAHVWVGGKV…EGLTHFEVLR (87 aa)) enclose the Acylphosphatase-like domain. Catalysis depends on residues R21 and N39.

The protein belongs to the acylphosphatase family.

It catalyses the reaction an acyl phosphate + H2O = a carboxylate + phosphate + H(+). The protein is Acylphosphatase (acyP) of Gloeobacter violaceus (strain ATCC 29082 / PCC 7421).